Here is a 193-residue protein sequence, read N- to C-terminus: Lipid A acyltransferase PagP (193 aa).

Residues 1 to 32 (MNGMAVVMIIRKYFLIIALLVMPWLAIPSVSA) form the signal peptide. Catalysis depends on residues His-65, Asp-108, and Ser-109.

This sequence belongs to the lipid A palmitoyltransferase family. As to quaternary structure, homodimer.

Its subcellular location is the cell outer membrane. It catalyses the reaction a lipid A + a 1,2-diacyl-sn-glycero-3-phosphocholine = a hepta-acyl lipid A + a 2-acyl-sn-glycero-3-phosphocholine. The enzyme catalyses a lipid IVA + a 1,2-diacyl-sn-glycero-3-phosphocholine = a lipid IVB + a 2-acyl-sn-glycero-3-phosphocholine. The catalysed reaction is a lipid IIA + a 1,2-diacyl-sn-glycero-3-phosphocholine = a lipid IIB + a 2-acyl-sn-glycero-3-phosphocholine. Transfers a fatty acid residue from the sn-1 position of a phospholipid to the N-linked hydroxyfatty acid chain on the proximal unit of lipid A or its precursors. The protein is Lipid A acyltransferase PagP of Salmonella paratyphi C (strain RKS4594).